The following is a 178-amino-acid chain: ATP synthase subunit delta (178 aa).

Belongs to the ATPase delta chain family. In terms of assembly, F-type ATPases have 2 components, F(1) - the catalytic core - and F(0) - the membrane proton channel. F(1) has five subunits: alpha(3), beta(3), gamma(1), delta(1), epsilon(1). F(0) has three main subunits: a(1), b(2) and c(10-14). The alpha and beta chains form an alternating ring which encloses part of the gamma chain. F(1) is attached to F(0) by a central stalk formed by the gamma and epsilon chains, while a peripheral stalk is formed by the delta and b chains.

The protein resides in the cell membrane. F(1)F(0) ATP synthase produces ATP from ADP in the presence of a proton or sodium gradient. F-type ATPases consist of two structural domains, F(1) containing the extramembraneous catalytic core and F(0) containing the membrane proton channel, linked together by a central stalk and a peripheral stalk. During catalysis, ATP synthesis in the catalytic domain of F(1) is coupled via a rotary mechanism of the central stalk subunits to proton translocation. Functionally, this protein is part of the stalk that links CF(0) to CF(1). It either transmits conformational changes from CF(0) to CF(1) or is implicated in proton conduction. This chain is ATP synthase subunit delta, found in Geobacillus stearothermophilus (Bacillus stearothermophilus).